The primary structure comprises 240 residues: UDP-2,3-diacylglucosamine hydrolase (240 aa).

Residues Asp-8, His-10, Asp-41, Asn-79, and His-114 each contribute to the Mn(2+) site. Residue 79–80 participates in substrate binding; that stretch reads NR. Positions 122, 160, 164, 167, and 195 each coordinate substrate. Mn(2+) contacts are provided by His-195 and His-197.

It belongs to the LpxH family. It depends on Mn(2+) as a cofactor.

It localises to the cell inner membrane. The enzyme catalyses UDP-2-N,3-O-bis[(3R)-3-hydroxytetradecanoyl]-alpha-D-glucosamine + H2O = 2-N,3-O-bis[(3R)-3-hydroxytetradecanoyl]-alpha-D-glucosaminyl 1-phosphate + UMP + 2 H(+). It functions in the pathway glycolipid biosynthesis; lipid IV(A) biosynthesis; lipid IV(A) from (3R)-3-hydroxytetradecanoyl-[acyl-carrier-protein] and UDP-N-acetyl-alpha-D-glucosamine: step 4/6. Functionally, hydrolyzes the pyrophosphate bond of UDP-2,3-diacylglucosamine to yield 2,3-diacylglucosamine 1-phosphate (lipid X) and UMP by catalyzing the attack of water at the alpha-P atom. Involved in the biosynthesis of lipid A, a phosphorylated glycolipid that anchors the lipopolysaccharide to the outer membrane of the cell. This Salmonella newport (strain SL254) protein is UDP-2,3-diacylglucosamine hydrolase.